A 174-amino-acid chain; its full sequence is ATP synthase subunit delta (174 aa).

Belongs to the ATPase delta chain family. F-type ATPases have 2 components, F(1) - the catalytic core - and F(0) - the membrane proton channel. F(1) has five subunits: alpha(3), beta(3), gamma(1), delta(1), epsilon(1). F(0) has three main subunits: a(1), b(2) and c(10-14). The alpha and beta chains form an alternating ring which encloses part of the gamma chain. F(1) is attached to F(0) by a central stalk formed by the gamma and epsilon chains, while a peripheral stalk is formed by the delta and b chains.

It localises to the cell inner membrane. In terms of biological role, f(1)F(0) ATP synthase produces ATP from ADP in the presence of a proton or sodium gradient. F-type ATPases consist of two structural domains, F(1) containing the extramembraneous catalytic core and F(0) containing the membrane proton channel, linked together by a central stalk and a peripheral stalk. During catalysis, ATP synthesis in the catalytic domain of F(1) is coupled via a rotary mechanism of the central stalk subunits to proton translocation. Its function is as follows. This protein is part of the stalk that links CF(0) to CF(1). It either transmits conformational changes from CF(0) to CF(1) or is implicated in proton conduction. In Francisella philomiragia subsp. philomiragia (strain ATCC 25017 / CCUG 19701 / FSC 153 / O#319-036), this protein is ATP synthase subunit delta.